The chain runs to 135 residues: Adult cuticle protein 1 (135 aa).

The N-terminal stretch at 1 to 19 (MKFAVAVIFTLALAMGVQS) is a signal peptide. A run of 3 repeats spans residues 72-75 (AAPA), 78-81 (AAPA), and 128-131 (AAPA).

In terms of tissue distribution, detected in the epidermis underlying the head and thorax (including legs and wings), but not in the abdominal epidermis of newly eclosed flies.

Its function is as follows. Component of the cuticle of the adult fruit fly. Could be involved in thickening of the hard adult cuticle. In Drosophila melanogaster (Fruit fly), this protein is Adult cuticle protein 1 (Acp1).